The sequence spans 184 residues: Probable chemoreceptor glutamine deamidase CheD (184 aa).

The protein belongs to the CheD family.

It catalyses the reaction L-glutaminyl-[protein] + H2O = L-glutamyl-[protein] + NH4(+). Functionally, probably deamidates glutamine residues to glutamate on methyl-accepting chemotaxis receptors (MCPs), playing an important role in chemotaxis. In Rhizobium johnstonii (strain DSM 114642 / LMG 32736 / 3841) (Rhizobium leguminosarum bv. viciae), this protein is Probable chemoreceptor glutamine deamidase CheD.